The sequence spans 473 residues: L-seryl-tRNA(Sec) selenium transferase (473 aa).

Lys-302 carries the post-translational modification N6-(pyridoxal phosphate)lysine.

It belongs to the SelA family. Requires pyridoxal 5'-phosphate as cofactor.

The protein resides in the cytoplasm. It carries out the reaction L-seryl-tRNA(Sec) + selenophosphate + H(+) = L-selenocysteinyl-tRNA(Sec) + phosphate. Its pathway is aminoacyl-tRNA biosynthesis; selenocysteinyl-tRNA(Sec) biosynthesis; selenocysteinyl-tRNA(Sec) from L-seryl-tRNA(Sec) (bacterial route): step 1/1. Its function is as follows. Converts seryl-tRNA(Sec) to selenocysteinyl-tRNA(Sec) required for selenoprotein biosynthesis. In Shewanella oneidensis (strain ATCC 700550 / JCM 31522 / CIP 106686 / LMG 19005 / NCIMB 14063 / MR-1), this protein is L-seryl-tRNA(Sec) selenium transferase.